Consider the following 130-residue polypeptide: Protein ApaG (130 aa).

One can recognise an ApaG domain in the interval 3-127 (KAETRGITVT…FSLDSPHLRR (125 aa)).

The chain is Protein ApaG from Methylorubrum populi (strain ATCC BAA-705 / NCIMB 13946 / BJ001) (Methylobacterium populi).